The following is a 303-amino-acid chain: Elongation factor Ts (303 aa).

Residues 79-82 (TDFV) form an involved in Mg(2+) ion dislocation from EF-Tu region.

This sequence belongs to the EF-Ts family.

The protein resides in the cytoplasm. Its function is as follows. Associates with the EF-Tu.GDP complex and induces the exchange of GDP to GTP. It remains bound to the aminoacyl-tRNA.EF-Tu.GTP complex up to the GTP hydrolysis stage on the ribosome. In Syntrophotalea carbinolica (strain DSM 2380 / NBRC 103641 / GraBd1) (Pelobacter carbinolicus), this protein is Elongation factor Ts.